The primary structure comprises 610 residues: UvrABC system protein C (610 aa).

The GIY-YIG domain maps to 16–94 (SQPGVYRMYD…IKLYQPRYNV (79 aa)). Residues 204–239 (DQVLTQLISRMETASQNLEFEEAARIRDQIQAVRRV) enclose the UVR domain.

The protein belongs to the UvrC family. As to quaternary structure, interacts with UvrB in an incision complex.

The protein localises to the cytoplasm. Functionally, the UvrABC repair system catalyzes the recognition and processing of DNA lesions. UvrC both incises the 5' and 3' sides of the lesion. The N-terminal half is responsible for the 3' incision and the C-terminal half is responsible for the 5' incision. The polypeptide is UvrABC system protein C (Escherichia coli O45:K1 (strain S88 / ExPEC)).